The chain runs to 161 residues: Allophycocyanin beta chain (161 aa).

Asn-71 bears the N4-methylasparagine mark. (2R,3E)-phycocyanobilin is bound at residue Cys-81.

It belongs to the phycobiliprotein family. As to quaternary structure, heterodimer of an alpha and a beta chain. In terms of processing, contains one covalently linked phycocyanobilin chromophore.

Its subcellular location is the plastid. It localises to the cyanelle thylakoid membrane. Its function is as follows. Light-harvesting photosynthetic bile pigment-protein from the phycobiliprotein complex. Allophycocyanin has a maximum absorption at approximately 650 nanometers. This chain is Allophycocyanin beta chain (apcB), found in Cyanophora paradoxa.